The following is a 104-amino-acid chain: Transcription and mRNA export factor ENY2 (104 aa).

Residues 1–14 (MADYGSDKKSRDNQ) show a composition bias toward basic and acidic residues. The interval 1-22 (MADYGSDKKSRDNQMRSAINQQ) is disordered.

Belongs to the ENY2 family. In terms of assembly, component of the nuclear pore complex (NPC)-associated TREX-2 complex (transcription and export complex 2). Component of the SAGA transcription coactivator-HAT complex. Within the SAGA complex, participates in a subcomplex of SAGA called the DUB module (deubiquitination module).

It is found in the nucleus. It localises to the nucleoplasm. In terms of biological role, involved in mRNA export coupled transcription activation by association with both the TREX-2 and the SAGA complexes. The transcription regulatory histone acetylation (HAT) complex SAGA is a multiprotein complex that activates transcription by remodeling chromatin and mediating histone acetylation and deubiquitination. Within the SAGA complex, participates in a subcomplex that specifically deubiquitinates histones. The SAGA complex is recruited to specific gene promoters by activators, where it is required for transcription. The TREX-2 complex functions in docking export-competent ribonucleoprotein particles (mRNPs) to the nuclear entrance of the nuclear pore complex (nuclear basket). TREX-2 participates in mRNA export and accurate chromatin positioning in the nucleus by tethering genes to the nuclear periphery. The protein is Transcription and mRNA export factor ENY2 of Ciona intestinalis (Transparent sea squirt).